A 139-amino-acid polypeptide reads, in one-letter code: MPPAKKGPATSARKGQKTRRREKKNVPHGAAHIKSTFNNTIVTITDPQGNVIAWASSGHVGFKGSRKSTPFAAQLAAENAARKAQDHGVRKVDVFVKGPGSGRETAIRSLQAAGLEVGAISDVTPQPHNGVRPPNRRRV.

The segment at 1-33 is disordered; it reads MPPAKKGPATSARKGQKTRRREKKNVPHGAAHI. A compositionally biased stretch (basic residues) spans 14-23; it reads KGQKTRRREK.

It belongs to the universal ribosomal protein uS11 family. In terms of assembly, part of the 30S ribosomal subunit. Interacts with proteins S7 and S18. Binds to IF-3.

Located on the platform of the 30S subunit, it bridges several disparate RNA helices of the 16S rRNA. Forms part of the Shine-Dalgarno cleft in the 70S ribosome. The polypeptide is Small ribosomal subunit protein uS11 (Mycobacterium bovis (strain ATCC BAA-935 / AF2122/97)).